Reading from the N-terminus, the 301-residue chain is Probable alpha-L-glutamate ligase (301 aa).

In terms of domain architecture, ATP-grasp spans 104-287; the sequence is LQLMSRKGLG…VASMIIKHIE (184 aa). ATP is bound by residues lysine 141, 178–179, aspartate 187, and 211–213; these read EY and RSN. 3 residues coordinate Mg(2+): aspartate 248, glutamate 260, and asparagine 262. Mn(2+) contacts are provided by aspartate 248, glutamate 260, and asparagine 262.

Belongs to the RimK family. Requires Mg(2+) as cofactor. Mn(2+) serves as cofactor.

The polypeptide is Probable alpha-L-glutamate ligase (Marinomonas sp. (strain MWYL1)).